A 130-amino-acid polypeptide reads, in one-letter code: Small ribosomal subunit protein bS6 (130 aa).

The interval 100–130 (SPMVKAKDERRERHDFASEANDDSEAGDSEE) is disordered. Residues 104 to 116 (KAKDERRERHDFA) are compositionally biased toward basic and acidic residues. Residues 119–130 (ANDDSEAGDSEE) show a composition bias toward acidic residues.

This sequence belongs to the bacterial ribosomal protein bS6 family.

Binds together with bS18 to 16S ribosomal RNA. In Yersinia pestis (strain Pestoides F), this protein is Small ribosomal subunit protein bS6.